The chain runs to 316 residues: Pantothenate kinase (316 aa).

An ATP-binding site is contributed by 95-102 (GSVSVGKS).

Belongs to the prokaryotic pantothenate kinase family.

The protein localises to the cytoplasm. The enzyme catalyses (R)-pantothenate + ATP = (R)-4'-phosphopantothenate + ADP + H(+). It participates in cofactor biosynthesis; coenzyme A biosynthesis; CoA from (R)-pantothenate: step 1/5. This chain is Pantothenate kinase, found in Haemophilus ducreyi (strain 35000HP / ATCC 700724).